The chain runs to 362 residues: Alpha-glucoside transport ATP-binding protein AglK (362 aa).

One can recognise an ABC transporter domain in the interval 4-235; that stretch reads LLLKDIRKSY…PANLFVARFI (232 aa). 36 to 43 lines the ATP pocket; the sequence is GPSGCGKS.

It belongs to the ABC transporter superfamily.

The protein resides in the cell inner membrane. In terms of biological role, part of the binding-protein-dependent transport system for alpha-glucosides such as sucrose, maltose and trehalose. Probably responsible for energy coupling to the transport system. The protein is Alpha-glucoside transport ATP-binding protein AglK (aglK) of Rhizobium meliloti (strain 1021) (Ensifer meliloti).